We begin with the raw amino-acid sequence, 520 residues long: J protein JJJ2 (520 aa).

In terms of domain architecture, J spans 7-71 (TYYSVLGLPT…SSKQEYDAIL (65 aa)). 2 disordered regions span residues 82-257 (LGYK…DLQN) and 389-409 (FESS…RGRP). Residues 91–100 (QNQSNNLNQQ) show a composition bias toward low complexity. The span at 152-182 (TSKNSKEQQGSQETTNTSENLQRNAKGNKNN) shows a compositional bias: polar residues. Positions 397–409 (ENHRSDFNLRGRP) are enriched in basic and acidic residues.

It is found in the cytoplasm. The protein localises to the nucleus. This Vanderwaltozyma polyspora (strain ATCC 22028 / DSM 70294 / BCRC 21397 / CBS 2163 / NBRC 10782 / NRRL Y-8283 / UCD 57-17) (Kluyveromyces polysporus) protein is J protein JJJ2 (JJJ2).